The following is a 455-amino-acid chain: Bifunctional protein GlmU (455 aa).

The interval 1–232 (MASITGALIL…DPNLLGVNDP (232 aa)) is pyrophosphorylase. Residues 10–13 (LAAG), lysine 24, glutamine 75, and 80–81 (GT) contribute to the UDP-N-acetyl-alpha-D-glucosamine site. Aspartate 106 is a binding site for Mg(2+). UDP-N-acetyl-alpha-D-glucosamine contacts are provided by glycine 141, glutamate 155, asparagine 172, and asparagine 230. Position 230 (asparagine 230) interacts with Mg(2+). Positions 233 to 253 (AELIRSEALVRARIALNWIEK) are linker. The interval 254 to 455 (RVLIHAPETV…QTTLPRRRNS (202 aa)) is N-acetyltransferase. Residues arginine 336 and lysine 354 each contribute to the UDP-N-acetyl-alpha-D-glucosamine site. The active-site Proton acceptor is the histidine 366. UDP-N-acetyl-alpha-D-glucosamine-binding residues include tyrosine 369 and asparagine 380. Acetyl-CoA is bound by residues alanine 383, 389–390 (NY), serine 408, alanine 426, and arginine 443.

In the N-terminal section; belongs to the N-acetylglucosamine-1-phosphate uridyltransferase family. It in the C-terminal section; belongs to the transferase hexapeptide repeat family. In terms of assembly, homotrimer. It depends on Mg(2+) as a cofactor.

It is found in the cytoplasm. The catalysed reaction is alpha-D-glucosamine 1-phosphate + acetyl-CoA = N-acetyl-alpha-D-glucosamine 1-phosphate + CoA + H(+). It catalyses the reaction N-acetyl-alpha-D-glucosamine 1-phosphate + UTP + H(+) = UDP-N-acetyl-alpha-D-glucosamine + diphosphate. It functions in the pathway nucleotide-sugar biosynthesis; UDP-N-acetyl-alpha-D-glucosamine biosynthesis; N-acetyl-alpha-D-glucosamine 1-phosphate from alpha-D-glucosamine 6-phosphate (route II): step 2/2. The protein operates within nucleotide-sugar biosynthesis; UDP-N-acetyl-alpha-D-glucosamine biosynthesis; UDP-N-acetyl-alpha-D-glucosamine from N-acetyl-alpha-D-glucosamine 1-phosphate: step 1/1. It participates in bacterial outer membrane biogenesis; LPS lipid A biosynthesis. Its function is as follows. Catalyzes the last two sequential reactions in the de novo biosynthetic pathway for UDP-N-acetylglucosamine (UDP-GlcNAc). The C-terminal domain catalyzes the transfer of acetyl group from acetyl coenzyme A to glucosamine-1-phosphate (GlcN-1-P) to produce N-acetylglucosamine-1-phosphate (GlcNAc-1-P), which is converted into UDP-GlcNAc by the transfer of uridine 5-monophosphate (from uridine 5-triphosphate), a reaction catalyzed by the N-terminal domain. This chain is Bifunctional protein GlmU, found in Nitratidesulfovibrio vulgaris (strain DSM 19637 / Miyazaki F) (Desulfovibrio vulgaris).